A 191-amino-acid chain; its full sequence is Imidazoleglycerol-phosphate dehydratase (191 aa).

It belongs to the imidazoleglycerol-phosphate dehydratase family.

Its subcellular location is the cytoplasm. The enzyme catalyses D-erythro-1-(imidazol-4-yl)glycerol 3-phosphate = 3-(imidazol-4-yl)-2-oxopropyl phosphate + H2O. The protein operates within amino-acid biosynthesis; L-histidine biosynthesis; L-histidine from 5-phospho-alpha-D-ribose 1-diphosphate: step 6/9. In Methanococcoides burtonii (strain DSM 6242 / NBRC 107633 / OCM 468 / ACE-M), this protein is Imidazoleglycerol-phosphate dehydratase.